A 278-amino-acid polypeptide reads, in one-letter code: Achaete-scute homolog 5 (278 aa).

Residues 1–66 are disordered; it reads MPMGAAERGA…GPFGGGLALG (66 aa). The bHLH domain maps to 155 to 207; it reads AFIQKRNERERQRVKCVNEGYARLRGHLPGALAEKRLSKVETLRAAIRYIKYL. Positions 214-278 are disordered; the sequence is APDGSTPPAS…PFLESEESWH (65 aa). The segment covering 230 to 239 has biased composition (pro residues); that stretch reads GPCPAPPATP. Residues 240-249 are compositionally biased toward basic and acidic residues; the sequence is RPDRPGDGEA. Low complexity predominate over residues 252-271; the sequence is PSSLVPESSESSCFSPSPFL.

As to quaternary structure, interacts with transcription factor TCF3/E12.

It localises to the nucleus. Transcription factor. Probably binds E-box motifs 5'-CANNTG-3' in complex with transcription factor TCF3/E12. Negatively modulates transcription of target genes such as CDH1/E-cadherin, perhaps by recruiting the PRC2 repressive complex to regulatory elements. Regulates ameloblast development and tooth germ growth, perhaps acting by positively modulating migration of inner enamel epithelium (IEE) cells. Plays a role in enamel formation. In Homo sapiens (Human), this protein is Achaete-scute homolog 5 (ASCL5).